The following is a 203-amino-acid chain: Imidazoleglycerol-phosphate dehydratase (203 aa).

It belongs to the imidazoleglycerol-phosphate dehydratase family.

Its subcellular location is the cytoplasm. The catalysed reaction is D-erythro-1-(imidazol-4-yl)glycerol 3-phosphate = 3-(imidazol-4-yl)-2-oxopropyl phosphate + H2O. It functions in the pathway amino-acid biosynthesis; L-histidine biosynthesis; L-histidine from 5-phospho-alpha-D-ribose 1-diphosphate: step 6/9. The sequence is that of Imidazoleglycerol-phosphate dehydratase from Parvibaculum lavamentivorans (strain DS-1 / DSM 13023 / NCIMB 13966).